The chain runs to 227 residues: Enolase-phosphatase E1 (227 aa).

It belongs to the HAD-like hydrolase superfamily. MasA/MtnC family. As to quaternary structure, monomer. Mg(2+) serves as cofactor.

The enzyme catalyses 5-methylsulfanyl-2,3-dioxopentyl phosphate + H2O = 1,2-dihydroxy-5-(methylsulfanyl)pent-1-en-3-one + phosphate. It participates in amino-acid biosynthesis; L-methionine biosynthesis via salvage pathway; L-methionine from S-methyl-5-thio-alpha-D-ribose 1-phosphate: step 3/6. It functions in the pathway amino-acid biosynthesis; L-methionine biosynthesis via salvage pathway; L-methionine from S-methyl-5-thio-alpha-D-ribose 1-phosphate: step 4/6. Its function is as follows. Bifunctional enzyme that catalyzes the enolization of 2,3-diketo-5-methylthiopentyl-1-phosphate (DK-MTP-1-P) into the intermediate 2-hydroxy-3-keto-5-methylthiopentenyl-1-phosphate (HK-MTPenyl-1-P), which is then dephosphorylated to form the acireductone 1,2-dihydroxy-3-keto-5-methylthiopentene (DHK-MTPene). This Pseudomonas fluorescens (strain Pf0-1) protein is Enolase-phosphatase E1.